Consider the following 104-residue polypeptide: uncharacterized protein (104 aa).

This is an uncharacterized protein from Haemophilus influenzae (strain ATCC 51907 / DSM 11121 / KW20 / Rd).